We begin with the raw amino-acid sequence, 605 residues long: Tegument protein UL47 homolog (605 aa).

A disordered region spans residues 1–75 (MATDNARPRS…DPWKLEPAND (75 aa)). The span at 8-17 (PRSRSLRRKS) shows a compositional bias: basic residues. The span at 54–69 (GADRDPGTRRGIDPWK) shows a compositional bias: basic and acidic residues.

Belongs to the alphaherpesvirinae HHV-1 UL47 family. Interacts with US3 kinase. Interacts with UL31 and UL34; these interactions seem important for efficient virion nuclear egress. Interacts with UL41/VHS. Phosphorylated by US3. This phosphorylation is required for proper nuclear localization.

Its subcellular location is the virion tegument. The protein resides in the host nucleus. It localises to the host cytoplasm. Functionally, tegument protein that can bind to various RNA transcripts. Plays a role in the attenuation of selective viral and cellular mRNA degradation by modulating the activity of host shutoff RNase UL41/VHS. Also plays a role in the primary envelopment of virions in the perinuclear space, probably by interacting with two nuclear egress proteins UL31 and UL34. The polypeptide is Tegument protein UL47 homolog (sORF1) (Amazona oratrix (yellow-headed parrot)).